Reading from the N-terminus, the 919-residue chain is Isoleucine--tRNA ligase (919 aa).

A 'HIGH' region motif is present at residues 57-67; it reads PYANGDIHMGT. Glutamate 552 lines the L-isoleucyl-5'-AMP pocket. A 'KMSKS' region motif is present at residues 593–597; the sequence is KMSKS. Lysine 596 contacts ATP. Residues cysteine 886, cysteine 889, cysteine 906, and cysteine 909 each coordinate Zn(2+).

This sequence belongs to the class-I aminoacyl-tRNA synthetase family. IleS type 1 subfamily. As to quaternary structure, monomer. Zn(2+) serves as cofactor.

Its subcellular location is the cytoplasm. The catalysed reaction is tRNA(Ile) + L-isoleucine + ATP = L-isoleucyl-tRNA(Ile) + AMP + diphosphate. Catalyzes the attachment of isoleucine to tRNA(Ile). As IleRS can inadvertently accommodate and process structurally similar amino acids such as valine, to avoid such errors it has two additional distinct tRNA(Ile)-dependent editing activities. One activity is designated as 'pretransfer' editing and involves the hydrolysis of activated Val-AMP. The other activity is designated 'posttransfer' editing and involves deacylation of mischarged Val-tRNA(Ile). The polypeptide is Isoleucine--tRNA ligase (Petrotoga mobilis (strain DSM 10674 / SJ95)).